The primary structure comprises 48 residues: Small polypeptide DEVIL 22 (48 aa).

The helical transmembrane segment at 7–23 threads the bilayer; the sequence is KLNKGHAFTSKCASLVK. A required for DVL/RTFL small polypeptide activity region spans residues 13-44; it reads AFTSKCASLVKEQRARLYILRRCATMLCCWYI.

Belongs to the DVL/RTFL small polypeptides family.

It is found in the cell membrane. Functionally, small polypeptide acting as a regulatory molecule which coordinates cellular responses required for differentiation, growth and development, probably by restricting polar cell proliferation in lateral organs and coordinating socket cell recruitment and differentiation at trichome sites. This Arabidopsis thaliana (Mouse-ear cress) protein is Small polypeptide DEVIL 22.